A 260-amino-acid polypeptide reads, in one-letter code: Small ribosomal subunit protein uS3 (260 aa).

Residues 39-114 enclose the KH type-2 domain; it reads LRQYIEQKLG…QIRINVVEVQ (76 aa). The disordered stretch occupies residues 218–260; sequence QEVATPPPSPRDRDRDRGDRDREPRRRQQQRRRQQFEDRSNEG. Basic and acidic residues-rich tracts occupy residues 227 to 243 and 251 to 260; these read PRDR…EPRR and QQFEDRSNEG.

This sequence belongs to the universal ribosomal protein uS3 family. In terms of assembly, part of the 30S ribosomal subunit. Forms a tight complex with proteins S10 and S14.

Binds the lower part of the 30S subunit head. Binds mRNA in the 70S ribosome, positioning it for translation. This chain is Small ribosomal subunit protein uS3, found in Nostoc sp. (strain PCC 7120 / SAG 25.82 / UTEX 2576).